Consider the following 190-residue polypeptide: Imidazoleglycerol-phosphate dehydratase (190 aa).

The protein belongs to the imidazoleglycerol-phosphate dehydratase family.

The protein localises to the cytoplasm. The enzyme catalyses D-erythro-1-(imidazol-4-yl)glycerol 3-phosphate = 3-(imidazol-4-yl)-2-oxopropyl phosphate + H2O. Its pathway is amino-acid biosynthesis; L-histidine biosynthesis; L-histidine from 5-phospho-alpha-D-ribose 1-diphosphate: step 6/9. The protein is Imidazoleglycerol-phosphate dehydratase of Methanococcus maripaludis (strain DSM 14266 / JCM 13030 / NBRC 101832 / S2 / LL).